The chain runs to 725 residues: ATP-dependent RNA helicase DRS1 (725 aa).

A disordered region spans residues 14 to 184 (DFVPTISDSE…AEEKVEEDTA (171 aa)). Positions 21 to 33 (DSEEDVPDLDSDE) are enriched in acidic residues. Basic and acidic residues-rich tracts occupy residues 85–95 (EEKKDVDLDKI) and 107–116 (HVDEAEKSES). 2 stretches are compositionally biased toward acidic residues: residues 117-127 (EESESDDEDLA) and 139-184 (PEGE…EDTA). Positions 206–234 (KTFNDLALSRPVMKGLSNLGYVKPSPIQS) match the Q motif motif. One can recognise a Helicase ATP-binding domain in the interval 237 to 412 (IPIALLGKDI…SLSLKRPVRI (176 aa)). Position 250–257 (250–257 (AVTGSGKT)) interacts with ATP. A DEAD box motif is present at residues 360 to 363 (DEAD). The 191-residue stretch at 423-613 (KLTQEFVRIR…NMDQTVQDIL (191 aa)) folds into the Helicase C-terminal domain. Residues 607 to 686 (QTVQDILVEE…KRKRNEAMED (80 aa)) adopt a coiled-coil conformation. The tract at residues 646-725 (PKRTWFQSEK…KKKGKSKGKR (80 aa)) is disordered. A compositionally biased stretch (basic and acidic residues) spans 669–707 (TKKEVNSKKRKRNEAMEDGHKRSYKKTQSDRTADQERTM). Over residues 708-725 (KKQAKANGKKKGKSKGKR) the composition is skewed to basic residues.

Belongs to the DEAD box helicase family. DDX27/DRS1 subfamily. In terms of assembly, associates with pre-ribosomal particles.

It localises to the nucleus. The protein resides in the nucleolus. The catalysed reaction is ATP + H2O = ADP + phosphate + H(+). Functionally, ATP-binding RNA helicase involved in ribosome assembly. The sequence is that of ATP-dependent RNA helicase DRS1 (DRS1) from Candida glabrata (strain ATCC 2001 / BCRC 20586 / JCM 3761 / NBRC 0622 / NRRL Y-65 / CBS 138) (Yeast).